The chain runs to 140 residues: UPF0654 protein C22G7.11c (140 aa).

Disordered regions lie at residues 1 to 88 (MPDP…DPMK) and 110 to 140 (YKAT…ETQA). Residues 24-33 (AKERAEDYIE) show a composition bias toward basic and acidic residues. The span at 34-44 (SHSSGQETGDY) shows a compositional bias: polar residues. Over residues 54–71 (DYEDLGDYDEDADFDNEE) the composition is skewed to acidic residues.

This sequence belongs to the UPF0654 (con-6) family.

The protein is UPF0654 protein C22G7.11c of Schizosaccharomyces pombe (strain 972 / ATCC 24843) (Fission yeast).